The sequence spans 653 residues: Fructose-1,6-bisphosphatase class 3 (653 aa).

It belongs to the FBPase class 3 family. Mn(2+) is required as a cofactor.

It carries out the reaction beta-D-fructose 1,6-bisphosphate + H2O = beta-D-fructose 6-phosphate + phosphate. It functions in the pathway carbohydrate biosynthesis; gluconeogenesis. This is Fructose-1,6-bisphosphatase class 3 from Listeria innocua serovar 6a (strain ATCC BAA-680 / CLIP 11262).